The sequence spans 273 residues: Ribosomal RNA small subunit methyltransferase A (273 aa).

S-adenosyl-L-methionine contacts are provided by asparagine 18, leucine 20, glycine 45, glutamate 66, aspartate 91, and asparagine 113.

The protein belongs to the class I-like SAM-binding methyltransferase superfamily. rRNA adenine N(6)-methyltransferase family. RsmA subfamily.

The protein localises to the cytoplasm. It catalyses the reaction adenosine(1518)/adenosine(1519) in 16S rRNA + 4 S-adenosyl-L-methionine = N(6)-dimethyladenosine(1518)/N(6)-dimethyladenosine(1519) in 16S rRNA + 4 S-adenosyl-L-homocysteine + 4 H(+). Its function is as follows. Specifically dimethylates two adjacent adenosines (A1518 and A1519) in the loop of a conserved hairpin near the 3'-end of 16S rRNA in the 30S particle. May play a critical role in biogenesis of 30S subunits. In Escherichia coli O17:K52:H18 (strain UMN026 / ExPEC), this protein is Ribosomal RNA small subunit methyltransferase A.